Reading from the N-terminus, the 412-residue chain is Imidazolonepropionase (412 aa).

Fe(3+) contacts are provided by His76 and His78. Zn(2+) is bound by residues His76 and His78. 4-imidazolone-5-propanoate-binding residues include Arg85, Tyr148, and His181. Tyr148 is an N-formimidoyl-L-glutamate binding site. His242 lines the Fe(3+) pocket. His242 contacts Zn(2+). A 4-imidazolone-5-propanoate-binding site is contributed by Glu245. Fe(3+) is bound at residue Asp317. Asp317 is a Zn(2+) binding site. N-formimidoyl-L-glutamate contacts are provided by Asn319 and Gly321. Ser322 is a binding site for 4-imidazolone-5-propanoate.

It belongs to the metallo-dependent hydrolases superfamily. HutI family. The cofactor is Zn(2+). It depends on Fe(3+) as a cofactor.

Its subcellular location is the cytoplasm. The enzyme catalyses 4-imidazolone-5-propanoate + H2O = N-formimidoyl-L-glutamate. It functions in the pathway amino-acid degradation; L-histidine degradation into L-glutamate; N-formimidoyl-L-glutamate from L-histidine: step 3/3. Catalyzes the hydrolytic cleavage of the carbon-nitrogen bond in imidazolone-5-propanoate to yield N-formimidoyl-L-glutamate. It is the third step in the universal histidine degradation pathway. The sequence is that of Imidazolonepropionase from Staphylococcus aureus (strain bovine RF122 / ET3-1).